A 345-amino-acid chain; its full sequence is Ribonucleoside-diphosphate reductase subunit beta (345 aa).

Residues D88, E118, and H121 each contribute to the Fe cation site. Residue Y125 is part of the active site. 3 residues coordinate Fe cation: E185, E219, and H222.

This sequence belongs to the ribonucleoside diphosphate reductase small chain family. As to quaternary structure, tetramer of two alpha and two beta subunits. Requires Fe cation as cofactor.

The enzyme catalyses a 2'-deoxyribonucleoside 5'-diphosphate + [thioredoxin]-disulfide + H2O = a ribonucleoside 5'-diphosphate + [thioredoxin]-dithiol. Functionally, provides the precursors necessary for DNA synthesis. Catalyzes the biosynthesis of deoxyribonucleotides from the corresponding ribonucleotides. This chain is Ribonucleoside-diphosphate reductase subunit beta (nrdB), found in Halalkalibacterium halodurans (strain ATCC BAA-125 / DSM 18197 / FERM 7344 / JCM 9153 / C-125) (Bacillus halodurans).